The sequence spans 297 residues: N-acetylmuramic acid 6-phosphate etherase (297 aa).

The SIS domain maps to 55 to 218 (AAAALTRGGR…STGAMVKCGK (164 aa)). The active-site Proton donor is E83. The active site involves E114.

The protein belongs to the GCKR-like family. MurNAc-6-P etherase subfamily. As to quaternary structure, homodimer.

The catalysed reaction is N-acetyl-D-muramate 6-phosphate + H2O = N-acetyl-D-glucosamine 6-phosphate + (R)-lactate. It participates in amino-sugar metabolism; 1,6-anhydro-N-acetylmuramate degradation. Its pathway is amino-sugar metabolism; N-acetylmuramate degradation. The protein operates within cell wall biogenesis; peptidoglycan recycling. Functionally, specifically catalyzes the cleavage of the D-lactyl ether substituent of MurNAc 6-phosphate, producing GlcNAc 6-phosphate and D-lactate. Together with AnmK, is also required for the utilization of anhydro-N-acetylmuramic acid (anhMurNAc) either imported from the medium or derived from its own cell wall murein, and thus plays a role in cell wall recycling. This is N-acetylmuramic acid 6-phosphate etherase from Cronobacter sakazakii (strain ATCC BAA-894) (Enterobacter sakazakii).